The chain runs to 212 residues: High frequency lysogenization protein HflD homolog (212 aa).

This sequence belongs to the HflD family.

Its subcellular location is the cytoplasm. The protein resides in the cell inner membrane. The chain is High frequency lysogenization protein HflD homolog from Stutzerimonas stutzeri (strain A1501) (Pseudomonas stutzeri).